The chain runs to 426 residues: Histidine--tRNA ligase (426 aa).

The protein belongs to the class-II aminoacyl-tRNA synthetase family.

The protein localises to the cytoplasm. The catalysed reaction is tRNA(His) + L-histidine + ATP = L-histidyl-tRNA(His) + AMP + diphosphate + H(+). The polypeptide is Histidine--tRNA ligase (Saccharolobus islandicus (strain M.16.27) (Sulfolobus islandicus)).